The following is a 786-amino-acid chain: Pentatricopeptide repeat-containing protein 10, chloroplastic (786 aa).

A disordered region spans residues 1-71 (MEATGRGLFP…HQTPTPPHSF (71 aa)). Residues 1–95 (MEATGRGLFP…HPLPTLAAFL (95 aa)) constitute a chloroplast transit peptide. Pro residues predominate over residues 27–36 (PAAPPPPSPS). A compositionally biased stretch (low complexity) spans 37–50 (SLPLDSLLLHLTAP). PPR repeat units follow at residues 137–167 (DASA…TPLP), 173–207 (DVRA…GVAP), 208–243 (TLVT…GVEP), 244–278 (DGFT…GHAP), 279–313 (CVVT…GCQP), 314–348 (DAVT…GLLP), 349–383 (NAFT…GFVP), 384–418 (NVNT…GCTP), 419–453 (NRVT…GVEL), 454–488 (SRDT…GFTP), 489–523 (CITT…GFKP), 524–558 (NEQS…GAVF), 560–594 (SWVI…GYNP), 595–629 (DLVI…GLSP), 630–664 (DLIT…QTMK), 666–700 (DVVS…GMAP), 701–735 (CAVT…GLKP), and 736–770 (MELT…DLDF).

Belongs to the PPR family. P subfamily. Forms homodimers.

It localises to the plastid. The protein resides in the chloroplast stroma. Its function is as follows. Involved in chloroplast mRNA stability. Binds specifically to two intergenic RNA regions of similar sequence located in the chloroplast atpH 5'-UTR and psaJ 3'-UTR, and serves as a barrier to RNA decay. Binding to a specific site in the intergenic region of the chloroplast atpH is sufficient to block 5'-3' and 3'-5' exonucleases. Acts as a protein barrier to block mRNA degradation by exonucleases, and defines processed mRNA termini in chloroplasts. Remodels the structure of the atpH ribosome-binding site in a manner that can account for its ability to enhance translation. Stabilizes a RNA 3'-end downstream from psaI. Binds atpH RNA as a monomer. This Zea mays (Maize) protein is Pentatricopeptide repeat-containing protein 10, chloroplastic.